Here is a 216-residue protein sequence, read N- to C-terminus: Ras-related protein Rab11C (216 aa).

Residue 19 to 26 coordinates GTP; it reads GDSGVGKS. Positions 41–49 match the Effector region motif; that stretch reads SKSTIGVEF. GTP contacts are provided by residues 67–71 and 125–128; these read DTAGQ and NKSD. S-geranylgeranyl cysteine attachment occurs at residues cysteine 213 and cysteine 214.

Belongs to the small GTPase superfamily. Rab family.

The protein localises to the cell membrane. This Lotus japonicus (Lotus corniculatus var. japonicus) protein is Ras-related protein Rab11C (RAB11C).